The chain runs to 147 residues: Cytochrome c-type biogenesis protein CcmE (147 aa).

Over Met1–Arg7 the chain is Cytoplasmic. Residues Leu8–Ala28 traverse the membrane as a helical; Signal-anchor for type II membrane protein segment. Topologically, residues Leu29 to Glu147 are periplasmic. The heme site is built by His122 and Tyr126.

This sequence belongs to the CcmE/CycJ family.

It is found in the cell inner membrane. Its function is as follows. Heme chaperone required for the biogenesis of c-type cytochromes. Transiently binds heme delivered by CcmC and transfers the heme to apo-cytochromes in a process facilitated by CcmF and CcmH. The protein is Cytochrome c-type biogenesis protein CcmE of Mesorhizobium japonicum (strain LMG 29417 / CECT 9101 / MAFF 303099) (Mesorhizobium loti (strain MAFF 303099)).